The following is a 48-amino-acid chain: Large ribosomal subunit protein bL33A (48 aa).

This sequence belongs to the bacterial ribosomal protein bL33 family.

This chain is Large ribosomal subunit protein bL33A, found in Limosilactobacillus fermentum (strain NBRC 3956 / LMG 18251) (Lactobacillus fermentum).